The chain runs to 1167 residues: Melanoma receptor tyrosine-protein kinase (1167 aa).

An N-terminal signal peptide occupies residues 1 to 25 (MEFLRGGAALLQLLLVLSISRCCST). Topologically, residues 26–642 (DPDRKVCQGT…GCRGDIVSHS (617 aa)) are extracellular. N-linked (GlcNAc...) asparagine glycosylation is found at asparagine 114, asparagine 144, and asparagine 201. Intrachain disulfides connect cysteine 195–cysteine 204, cysteine 199–cysteine 212, cysteine 220–cysteine 228, cysteine 224–cysteine 236, cysteine 237–cysteine 245, cysteine 241–cysteine 253, cysteine 256–cysteine 265, cysteine 269–cysteine 296, cysteine 300–cysteine 311, cysteine 315–cysteine 330, and cysteine 333–cysteine 337. Asparagine 356, asparagine 365, asparagine 398, asparagine 417, and asparagine 501 each carry an N-linked (GlcNAc...) asparagine glycan. Intrachain disulfides connect cysteine 504/cysteine 513, cysteine 508/cysteine 521, cysteine 524/cysteine 533, cysteine 537/cysteine 553, cysteine 556/cysteine 569, cysteine 560/cysteine 577, cysteine 593/cysteine 615, cysteine 618/cysteine 626, and cysteine 622/cysteine 634. Residue asparagine 576 is glycosylated (N-linked (GlcNAc...) asparagine). An N-linked (GlcNAc...) asparagine glycan is attached at asparagine 621. A helical transmembrane segment spans residues 643–665 (SLAVGLVSGLLITVIVALLIVVL). At 666–1167 (LRRRRIKRKR…QGGALYTPVR (502 aa)) the chain is on the cytoplasmic side. One can recognise a Protein kinase domain in the interval 710 to 977 (FKKDRVLGSG…QMARDPSRYL (268 aa)). Residues 716 to 724 (LGSGAFGTV) and lysine 743 each bind ATP. Residue aspartate 835 is the Proton acceptor of the active site.

Belongs to the protein kinase superfamily. Tyr protein kinase family. EGF receptor subfamily.

It is found in the membrane. The enzyme catalyses L-tyrosyl-[protein] + ATP = O-phospho-L-tyrosyl-[protein] + ADP + H(+). Functionally, probable receptor with tyrosine-protein kinase activity. This chain is Melanoma receptor tyrosine-protein kinase (xmrk), found in Xiphophorus maculatus (Southern platyfish).